The following is a 431-amino-acid chain: Histidinol dehydrogenase (431 aa).

Residues Y127, Q189, and N212 each contribute to the NAD(+) site. Substrate-binding residues include S237, Q259, and H262. The Zn(2+) site is built by Q259 and H262. Active-site proton acceptor residues include E326 and H327. Residues H327, D360, E414, and H419 each coordinate substrate. D360 is a binding site for Zn(2+). H419 serves as a coordination point for Zn(2+).

Belongs to the histidinol dehydrogenase family. Zn(2+) is required as a cofactor.

It carries out the reaction L-histidinol + 2 NAD(+) + H2O = L-histidine + 2 NADH + 3 H(+). It functions in the pathway amino-acid biosynthesis; L-histidine biosynthesis; L-histidine from 5-phospho-alpha-D-ribose 1-diphosphate: step 9/9. In terms of biological role, catalyzes the sequential NAD-dependent oxidations of L-histidinol to L-histidinaldehyde and then to L-histidine. This chain is Histidinol dehydrogenase, found in Xanthomonas oryzae pv. oryzae (strain KACC10331 / KXO85).